We begin with the raw amino-acid sequence, 701 residues long: Acetyl-coenzyme A synthetase, cytoplasmic (701 aa).

The disordered stretch occupies residues 1-41; the sequence is MGLPEERVRSGSGSRGQEEAGAGGRARSWSPPPEVSRSAHV. Positions 1–107 are interaction with TFEB; that stretch reads MGLPEERVRS…GATTNICYNV (107 aa). Phosphoserine is present on residues Ser-28, Ser-30, and Ser-36. Residue 219–222 participates in CoA binding; that stretch reads RGEK. 3 positions are modified to phosphoserine: Ser-263, Ser-265, and Ser-267. Thr-363 lines the CoA pocket. An N6-acetyllysine modification is found at Lys-418. ATP-binding positions include 439-441, 463-468, Asp-552, and Arg-567; these read GEP and DTFWQT. 2 residues coordinate CoA: Ser-575 and Arg-636. Residues 656–668 carry the Nuclear localization signal motif; the sequence is KTRSGKIMRRVLR. Phosphoserine; by AMPK is present on Ser-659. Lys-661 bears the N6-acetyllysine mark.

It belongs to the ATP-dependent AMP-binding enzyme family. As to quaternary structure, monomer. Interacts with TFEB. AMPK-mediated phosphorylated form at Ser-659 interacts with KPNA1; this interaction results in nuclear translocation of ACSS2. Interacts with the 'Thr-172' phosphorylated form of PRKAA2. Interacts with CREBBP. Reversibly acetylated at Lys-661. The acetyl-CoA synthase activity is inhibited by acetylation and activated by deacetylation mediated by the deacetylases SIRT1 and SIRT3. In terms of processing, glucose deprivation results in its AMPK-dependent phosphorylation at Ser-659, which leads to exposure of its nuclear localization signal, required for its interaction with KPNA1 and subsequent translocation to the nucleus.

The protein localises to the cytoplasm. It localises to the cytosol. Its subcellular location is the nucleus. The catalysed reaction is acetate + ATP + CoA = acetyl-CoA + AMP + diphosphate. It catalyses the reaction propanoate + ATP + CoA = propanoyl-CoA + AMP + diphosphate. Inhibited by acetylation at Lys-661 and activated by deacetylation mediated by the deacetylases SIRT1 and SIRT3. Functionally, catalyzes the synthesis of acetyl-CoA from short-chain fatty acids. Acetate is the preferred substrate. Can also utilize propionate with a much lower affinity. Nuclear ACSS2 promotes glucose deprivation-induced lysosomal biogenesis and autophagy, tumor cell survival and brain tumorigenesis. Glucose deprivation results in AMPK-mediated phosphorylation of ACSS2 leading to its translocation to the nucleus where it binds to TFEB and locally produces acetyl-CoA for histone acetylation in the promoter regions of TFEB target genes thereby activating their transcription. The regulation of genes associated with autophagy and lysosomal activity through ACSS2 is important for brain tumorigenesis and tumor survival. Acts as a chromatin-bound transcriptional coactivator that up-regulates histone acetylation and expression of neuronal genes. Can be recruited to the loci of memory-related neuronal genes to maintain a local acetyl-CoA pool, providing the substrate for histone acetylation and promoting the expression of specific genes, which is essential for maintaining long-term spatial memory. The polypeptide is Acetyl-coenzyme A synthetase, cytoplasmic (ACSS2) (Homo sapiens (Human)).